Here is a 338-residue protein sequence, read N- to C-terminus: Methionine synthase (338 aa).

Residues His-211, Cys-213, and Cys-294 each coordinate Zn(2+).

It belongs to the archaeal MetE family. The cofactor is Zn(2+).

Its pathway is amino-acid biosynthesis; L-methionine biosynthesis via de novo pathway. Its function is as follows. Catalyzes the transfer of a methyl group to L-homocysteine resulting in methionine formation. The physiological methyl donor is unknown. The sequence is that of Methionine synthase from Sulfurisphaera tokodaii (strain DSM 16993 / JCM 10545 / NBRC 100140 / 7) (Sulfolobus tokodaii).